The following is a 306-amino-acid chain: Palmitoyl-protein thioesterase ABHD10, mitochondrial (306 aa).

The N-terminal 52 residues, Met-1–Lys-52, are a transit peptide targeting the mitochondrion. The 100-residue stretch at Ile-78–Thr-177 folds into the AB hydrolase-1 domain. Catalysis depends on charge relay system residues Ser-152, Asp-249, and His-279.

This sequence belongs to the AB hydrolase superfamily.

The protein localises to the mitochondrion. It catalyses the reaction S-hexadecanoyl-L-cysteinyl-[protein] + H2O = L-cysteinyl-[protein] + hexadecanoate + H(+). The enzyme catalyses mycophenolic acid O-acyl-beta-D-glucuronide + H2O = mycophenolate + D-glucuronate + H(+). Its activity is regulated as follows. Inhibited by palmostatin-B. Its function is as follows. Acts as an acyl-protein thioesterase that hydrolyzes fatty acids from acylated residues in proteins. Regulates the mitochondrial S-depalmitoylation of the nucleophilic active site residue of peroxiredoxin-5/PRDX5, a key antioxidant protein, therefore modulating mitochondrial antioxidant ability. Also catalyzes the deglucuronidation of mycophenolic acid acyl-glucuronide, an active metabolite of the immunosuppressant drug mycophenolate. In Pongo abelii (Sumatran orangutan), this protein is Palmitoyl-protein thioesterase ABHD10, mitochondrial (ABHD10).